Here is a 263-residue protein sequence, read N- to C-terminus: Methylesterase 4 (263 aa).

The Acyl-ester intermediate role is filled by S84. Active-site charge relay system residues include D213 and H241.

The protein belongs to the AB hydrolase superfamily. Methylesterase family.

The catalysed reaction is methyl salicylate + H2O = salicylate + methanol + H(+). Its pathway is plant hormone biosynthesis. With respect to regulation, esterase activity is down-regulated by salicylic acid (SA). Its function is as follows. Methylesterase shown to have carboxylesterase activity and methyl salicylate (MeSA) esterase activity in vitro. The sequence is that of Methylesterase 4 from Arabidopsis thaliana (Mouse-ear cress).